The primary structure comprises 198 residues: Recombination protein RecR (198 aa).

The segment at 57–72 (CQRCNTFSEAELCAIC) adopts a C4-type zinc-finger fold. The Toprim domain maps to 80–175 (DQLCIVEMPA…TVTRIARGMP (96 aa)).

Belongs to the RecR family.

In terms of biological role, may play a role in DNA repair. It seems to be involved in an RecBC-independent recombinational process of DNA repair. It may act with RecF and RecO. The protein is Recombination protein RecR of Chromobacterium violaceum (strain ATCC 12472 / DSM 30191 / JCM 1249 / CCUG 213 / NBRC 12614 / NCIMB 9131 / NCTC 9757 / MK).